Here is a 318-residue protein sequence, read N- to C-terminus: Ribose-phosphate pyrophosphokinase 2 (318 aa).

Mg(2+) contacts are provided by Asp132, His134, His143, and Asp147.

The protein belongs to the ribose-phosphate pyrophosphokinase family.

The protein localises to the cytoplasm. It catalyses the reaction D-ribose 5-phosphate + ATP = 5-phospho-alpha-D-ribose 1-diphosphate + AMP + H(+). It functions in the pathway metabolic intermediate biosynthesis; 5-phospho-alpha-D-ribose 1-diphosphate biosynthesis; 5-phospho-alpha-D-ribose 1-diphosphate from D-ribose 5-phosphate (route I): step 1/1. Functionally, 5-phosphoribose 1-diphosphate synthase involved in nucleotide, histidine, and tryptophan biosynthesis. Active in heteromultimeric complexes with other 5-phosphoribose 1-diphosphate synthases (PRS2, PRS3, PRS4 and PRS5). The chain is Ribose-phosphate pyrophosphokinase 2 (PRS2) from Saccharomyces cerevisiae (strain ATCC 204508 / S288c) (Baker's yeast).